Here is a 359-residue protein sequence, read N- to C-terminus: 3-dehydroquinate synthase (359 aa).

NAD(+)-binding positions include 71 to 76 (DGEAYK), 105 to 109 (GVVGD), 129 to 130 (TT), K142, and K151. Zn(2+) is bound by residues E184, H247, and H264.

It belongs to the sugar phosphate cyclases superfamily. Dehydroquinate synthase family. Requires Co(2+) as cofactor. The cofactor is Zn(2+). NAD(+) serves as cofactor.

The protein localises to the cytoplasm. It catalyses the reaction 7-phospho-2-dehydro-3-deoxy-D-arabino-heptonate = 3-dehydroquinate + phosphate. Its pathway is metabolic intermediate biosynthesis; chorismate biosynthesis; chorismate from D-erythrose 4-phosphate and phosphoenolpyruvate: step 2/7. Functionally, catalyzes the conversion of 3-deoxy-D-arabino-heptulosonate 7-phosphate (DAHP) to dehydroquinate (DHQ). The sequence is that of 3-dehydroquinate synthase from Burkholderia orbicola (strain MC0-3).